Here is a 160-residue protein sequence, read N- to C-terminus: FMRFamide-like neuropeptides 13 (160 aa).

The N-terminal stretch at 1–17 is a signal peptide; it reads MMTSLLTISMFVVAIQA. The propeptide occupies 18–43; sequence FDSSEIRMLDEQYDTKNPFFQFLENS. Residues phenylalanine 60, phenylalanine 73, phenylalanine 85, phenylalanine 98, phenylalanine 110, phenylalanine 123, phenylalanine 135, phenylalanine 146, and phenylalanine 157 each carry the phenylalanine amide modification.

It belongs to the FARP (FMRFamide related peptide) family. In terms of tissue distribution, expressed in the ASE sensory neurons, the DD motor neurons, the 15, M3 and M5 cholinergic pharyngeal motoneurons, and the ASG, ASK and BAG neurons.

It localises to the secreted. Probable FMRFamide-like neuropeptides. Binds to neuronal receptors such as dmsr-1 to promote sleep in response to cellular stress also known as stress-induced sleep (SIS). Plays a role in behaviors associated with SIS, acting in concert with the FMRFamide related peptide, flp-24 and neuropeptide-like protein nlp-8. Functionally, AADGAPLIRF-amide: Inhibits muscle tension in somatic muscle. Acts as a ligand for the npr-22 receptor in vitro. Acts as a ligand for isoform a of the dmsr-1 G-protein coupled receptor in vitro. In terms of biological role, APEASPFIRF-amide: Inhibits muscle tension in somatic muscle. Potent inhibitor of the activity of the dissected pharyngeal myogenic muscle system. Acts as a ligand for isoform a of the dmsr-1 G-protein coupled receptor in vitro. Its function is as follows. Acts as a ligand for the npr-22 receptor in vitro. Acts as a ligand for isoform a of the dmsr-1 G-protein coupled receptor in vitro. Acts as a ligand for isoform a of the dmsr-1 G-protein coupled receptor in vitro. The polypeptide is FMRFamide-like neuropeptides 13 (Caenorhabditis elegans).